The following is a 310-amino-acid chain: Bacteriochlorophyll synthase 34 kDa chain (310 aa).

The span at 1 to 13 shows a compositional bias: polar residues; it reads MSDMSDQTRLSSP. The interval 1–20 is disordered; sequence MSDMSDQTRLSSPPSLPLHK. 8 helical membrane-spanning segments follow: residues 39–59, 67–87, 112–132, 134–154, 166–186, 187–207, 248–268, and 287–307; these read VTWF…GALG, LLLG…VVND, HVYI…LFLG, QVAF…LRPI, LVAI…FAPL, TGES…IMTV, VIGL…AILL, and VFFN…AAIG.

It localises to the cell membrane. The protein operates within porphyrin-containing compound metabolism; bacteriochlorophyll biosynthesis (light-independent). Functionally, catalyzes the esterification of bacteriochlorophyllide a by geranylgeraniol-PPi. This chain is Bacteriochlorophyll synthase 34 kDa chain (bchG), found in Chloroflexus aurantiacus (strain ATCC 29366 / DSM 635 / J-10-fl).